A 27-amino-acid chain; its full sequence is uncharacterized protein (27 aa).

It is found in the mitochondrion. This is an uncharacterized protein from Emericella nidulans (Aspergillus nidulans).